The chain runs to 409 residues: Putative lipoate-protein ligase A (409 aa).

The BPL/LPL catalytic domain maps to 146–330 (GPDNCRLLFY…RFQKTFKVDG (185 aa)). ATP contacts are provided by residues Arg-188, 193–196 (GTVL), and Lys-249. Lys-249 contributes to the (R)-lipoate binding site.

It belongs to the LplA family. As to quaternary structure, monomer.

The enzyme catalyses L-lysyl-[lipoyl-carrier protein] + (R)-lipoate + ATP = N(6)-[(R)-lipoyl]-L-lysyl-[lipoyl-carrier protein] + AMP + diphosphate + H(+). It functions in the pathway protein modification; protein lipoylation via exogenous pathway; protein N(6)-(lipoyl)lysine from lipoate: step 1/2. Its pathway is protein modification; protein lipoylation via exogenous pathway; protein N(6)-(lipoyl)lysine from lipoate: step 2/2. Functionally, catalyzes both the ATP-dependent activation of exogenously supplied lipoate to lipoyl-AMP and the transfer of the activated lipoyl onto the lipoyl domains of lipoate-dependent enzymes. The protein is Putative lipoate-protein ligase A (AIM22) of Saccharomyces cerevisiae (strain RM11-1a) (Baker's yeast).